The following is a 106-amino-acid chain: Large ribosomal subunit protein eL36 (106 aa).

Basic and acidic residues predominate over residues 75–93; it reads VRQEKVGHSQESKEEERGD. The interval 75–106 is disordered; it reads VRQEKVGHSQESKEEERGDVQCSPPDEGWWWY.

Belongs to the eukaryotic ribosomal protein eL36 family.

The chain is Large ribosomal subunit protein eL36 (RPL36) from Daucus carota (Wild carrot).